The following is a 319-amino-acid chain: Mas-related G-protein coupled receptor member D (319 aa).

Over 1-30 (MNYTPYSSPAPGLTISPTMDPVTWVYFSVT) the chain is Extracellular. Residues 31 to 51 (FLAMATCVCGIVGNSMVIWLL) traverse the membrane as a helical segment. Residues 52 to 64 (SFHRVQRSPFCTY) are Cytoplasmic-facing. Residues 65 to 85 (VLNLAVADLLFLLCMASLLSL) form a helical membrane-spanning segment. Over 86–92 (ETGPLLT) the chain is Extracellular. The chain crosses the membrane as a helical span at residues 93 to 113 (ASTSARVYEGMKRIKYFAYTA). The Cytoplasmic portion of the chain corresponds to 114–144 (GLSLLTAISTQRCLSVLFPIWYKCHRPQHLS). A helical membrane pass occupies residues 145–165 (GVVCGVLWALALLMNFLASFF). Residues 166 to 184 (CVQFWHPDKYQCFKVDMVF) are Extracellular-facing. The chain crosses the membrane as a helical span at residues 185-205 (NSLILGIFMPVMVLTSAIIFI). Over 206 to 220 (RMRKNSLLQRRQPRR) the chain is Cytoplasmic. The helical transmembrane segment at 221-241 (LYVVILTSVLVFLTCSLPLGI) threads the bilayer. Topologically, residues 242–260 (NWFLLYWVELPQAVRLLYV) are extracellular. A helical membrane pass occupies residues 261–281 (CSSRFSSSLSSSANPVIYFLV). Over 282-319 (GSQKSHRLQESLGAVLGRALQDEPEGRETPSTCTNDGV) the chain is Cytoplasmic.

This sequence belongs to the G-protein coupled receptor 1 family. Mas subfamily. In terms of tissue distribution, co-expressed in the small diameter neurons with P2X3 and VR1 in dorsal root ganglia.

The protein localises to the cell membrane. In terms of biological role, may regulate nociceptor function and/or development, including the sensation or modulation of pain. Functions as a specific membrane receptor for beta-alanine. The receptor couples with G-protein G(q) and G(i). The polypeptide is Mas-related G-protein coupled receptor member D (Mrgprd) (Rattus norvegicus (Rat)).